The chain runs to 296 residues: CRISPR-associated endonuclease Cas1 2 (296 aa).

3 residues coordinate Mn(2+): Glu157, His224, and Asp237.

The protein belongs to the CRISPR-associated endonuclease Cas1 family. In terms of assembly, homodimer, forms a heterotetramer with a Cas2 homodimer. Mg(2+) serves as cofactor. Requires Mn(2+) as cofactor.

Functionally, CRISPR (clustered regularly interspaced short palindromic repeat), is an adaptive immune system that provides protection against mobile genetic elements (viruses, transposable elements and conjugative plasmids). CRISPR clusters contain spacers, sequences complementary to antecedent mobile elements, and target invading nucleic acids. CRISPR clusters are transcribed and processed into CRISPR RNA (crRNA). Acts as a dsDNA endonuclease. Involved in the integration of spacer DNA into the CRISPR cassette. The protein is CRISPR-associated endonuclease Cas1 2 of Chlorobaculum tepidum (strain ATCC 49652 / DSM 12025 / NBRC 103806 / TLS) (Chlorobium tepidum).